The chain runs to 477 residues: Alanine--glyoxylate aminotransferase 2 homolog 2, mitochondrial (477 aa).

The transit peptide at M1–I22 directs the protein to the mitochondrion. Residues G165–T166, Y192, and D292–Q295 each bind pyridoxal 5'-phosphate. K321 carries the post-translational modification N6-(pyridoxal phosphate)lysine. T350 contacts pyridoxal 5'-phosphate.

The protein belongs to the class-III pyridoxal-phosphate-dependent aminotransferase family. Homotetramer. Interacts with GRF3. It depends on pyridoxal 5'-phosphate as a cofactor.

Its subcellular location is the mitochondrion. The catalysed reaction is glyoxylate + L-alanine = glycine + pyruvate. This is Alanine--glyoxylate aminotransferase 2 homolog 2, mitochondrial (AGT3) from Arabidopsis thaliana (Mouse-ear cress).